The chain runs to 646 residues: Threonine--tRNA ligase (646 aa).

The region spanning 1-63 (MAQISLTFPD…EADAKIAIHT (63 aa)) is the TGS domain. The tract at residues 247–544 (DHRKLGKEME…LIENYAGKLP (298 aa)) is catalytic. Zn(2+) is bound by residues cysteine 344, histidine 395, and histidine 521.

This sequence belongs to the class-II aminoacyl-tRNA synthetase family. In terms of assembly, homodimer. Zn(2+) is required as a cofactor.

It localises to the cytoplasm. It catalyses the reaction tRNA(Thr) + L-threonine + ATP = L-threonyl-tRNA(Thr) + AMP + diphosphate + H(+). Catalyzes the attachment of threonine to tRNA(Thr) in a two-step reaction: L-threonine is first activated by ATP to form Thr-AMP and then transferred to the acceptor end of tRNA(Thr). Also edits incorrectly charged L-seryl-tRNA(Thr). This chain is Threonine--tRNA ligase, found in Cereibacter sphaeroides (strain ATCC 17025 / ATH 2.4.3) (Rhodobacter sphaeroides).